Reading from the N-terminus, the 286-residue chain is ATP synthase gamma chain (286 aa).

Belongs to the ATPase gamma chain family. F-type ATPases have 2 components, CF(1) - the catalytic core - and CF(0) - the membrane proton channel. CF(1) has five subunits: alpha(3), beta(3), gamma(1), delta(1), epsilon(1). CF(0) has three main subunits: a, b and c.

It is found in the cell inner membrane. Functionally, produces ATP from ADP in the presence of a proton gradient across the membrane. The gamma chain is believed to be important in regulating ATPase activity and the flow of protons through the CF(0) complex. The polypeptide is ATP synthase gamma chain (Shewanella piezotolerans (strain WP3 / JCM 13877)).